Here is a 297-residue protein sequence, read N- to C-terminus: MPIKETDKEVVLTHPADETTSVHILKYGATVYSWKLKSEEQLWLSTAAKLDGSKPVRGGIPLVFPVFGKNSTDEHLSKLPQHGLARNSTWEFLGQTKENPPTVQFGLKPEIANPELTKLWPMDYLLILTVELGSDYLKTAIEVENTSSSKELKFNWLFHTYFRIEDIEGTMVSNLAGMKLYDQLLKESYVDKHPVVTFNQETDVIYQNVSAERAIQIVDKGVQIHTLKRYNLPDTVVWNPWIEKSQGMADFEPKTGYQQMICIEPGHVHDFISLAPGKKWNAYQLLCKEELKYQAIQ.

Arginine 57, glutamine 81, and arginine 86 together coordinate substrate. Phosphoserine is present on serine 88. The active site involves histidine 159. Position 203 (aspartate 203) interacts with substrate. The active site involves glutamate 264.

This sequence belongs to the glucose-6-phosphate 1-epimerase family.

The catalysed reaction is alpha-D-glucose 6-phosphate = beta-D-glucose 6-phosphate. Functionally, catalyzes the interconversion between the alpha and beta anomers from at least three hexose 6-phosphate sugars (Glc6P, Gal6P, and Man6P). This Saccharomyces cerevisiae (strain ATCC 204508 / S288c) (Baker's yeast) protein is Glucose-6-phosphate 1-epimerase.